We begin with the raw amino-acid sequence, 388 residues long: Succinate--CoA ligase [ADP-forming] subunit beta (388 aa).

Residues 9–244 form the ATP-grasp domain; the sequence is KEILRKFGVA…LDEEDPAEIE (236 aa). ATP contacts are provided by residues Lys46, 53–55, Glu99, Ala102, and Glu107; that span reads GRG. 2 residues coordinate Mg(2+): Asn199 and Asp213. Substrate-binding positions include Asn264 and 321-323; that span reads GIM.

Belongs to the succinate/malate CoA ligase beta subunit family. As to quaternary structure, heterotetramer of two alpha and two beta subunits. Requires Mg(2+) as cofactor.

It catalyses the reaction succinate + ATP + CoA = succinyl-CoA + ADP + phosphate. It carries out the reaction GTP + succinate + CoA = succinyl-CoA + GDP + phosphate. It functions in the pathway carbohydrate metabolism; tricarboxylic acid cycle; succinate from succinyl-CoA (ligase route): step 1/1. Succinyl-CoA synthetase functions in the citric acid cycle (TCA), coupling the hydrolysis of succinyl-CoA to the synthesis of either ATP or GTP and thus represents the only step of substrate-level phosphorylation in the TCA. The beta subunit provides nucleotide specificity of the enzyme and binds the substrate succinate, while the binding sites for coenzyme A and phosphate are found in the alpha subunit. This is Succinate--CoA ligase [ADP-forming] subunit beta from Burkholderia vietnamiensis (strain G4 / LMG 22486) (Burkholderia cepacia (strain R1808)).